A 329-amino-acid polypeptide reads, in one-letter code: Beta-ketoacyl-[acyl-carrier-protein] synthase III (329 aa).

Active-site residues include Cys-123 and His-256. Residues 257–261 (QANIR) are ACP-binding. Residue Asn-286 is part of the active site.

It belongs to the thiolase-like superfamily. FabH family. As to quaternary structure, homodimer.

Its subcellular location is the cytoplasm. It carries out the reaction malonyl-[ACP] + acetyl-CoA + H(+) = 3-oxobutanoyl-[ACP] + CO2 + CoA. Its pathway is lipid metabolism; fatty acid biosynthesis. Catalyzes the condensation reaction of fatty acid synthesis by the addition to an acyl acceptor of two carbons from malonyl-ACP. Catalyzes the first condensation reaction which initiates fatty acid synthesis and may therefore play a role in governing the total rate of fatty acid production. Possesses both acetoacetyl-ACP synthase and acetyl transacylase activities. Its substrate specificity determines the biosynthesis of branched-chain and/or straight-chain of fatty acids. The chain is Beta-ketoacyl-[acyl-carrier-protein] synthase III from Burkholderia vietnamiensis (strain G4 / LMG 22486) (Burkholderia cepacia (strain R1808)).